Reading from the N-terminus, the 1246-residue chain is Zinc finger protein 687a (1246 aa).

The segment covering Lys-24–Ser-47 has biased composition (basic and acidic residues). Residues Lys-24–Ala-387 form a disordered region. Composition is skewed to polar residues over residues Gly-88–Pro-111 and Ala-163–Lys-195. Residues Ser-287–Pro-301 show a composition bias toward low complexity. The span at Val-302–Pro-317 shows a compositional bias: basic and acidic residues. The span at Gln-326 to Ala-338 shows a compositional bias: polar residues. 2 stretches are compositionally biased toward basic and acidic residues: residues Ser-341 to Ala-350 and Met-360 to Ser-375. Residues Tyr-587 to His-619 form a C2H2-type 1 zinc finger. Residues His-696 to Glu-719 form a C2H2-type 2; degenerate zinc finger. 3 C2H2-type zinc fingers span residues His-817 to His-840, Tyr-854 to His-876, and Phe-885 to His-908. Positions Thr-907 to Pro-953 are disordered. Over residues His-914–Leu-923 the composition is skewed to polar residues. Residues Ser-929 to Glu-940 show a composition bias toward acidic residues. 2 consecutive C2H2-type zinc fingers follow at residues Trp-958–His-981 and Phe-988–His-1011. The C2H2-type 8; degenerate zinc-finger motif lies at Phe-1018 to His-1044. The disordered stretch occupies residues Ala-1045–Arg-1093. C2H2-type zinc fingers lie at residues Ala-1137 to His-1160 and His-1210 to His-1232.

Belongs to the krueppel C2H2-type zinc-finger protein family. In terms of tissue distribution, widely expressed with highest levels in kidney, spleen and ovary.

It is found in the nucleus. Its function is as follows. May be involved in transcriptional regulation. The chain is Zinc finger protein 687a (znf687a) from Danio rerio (Zebrafish).